The chain runs to 292 residues: ATP synthase gamma chain (292 aa).

This sequence belongs to the ATPase gamma chain family. As to quaternary structure, F-type ATPases have 2 components, CF(1) - the catalytic core - and CF(0) - the membrane proton channel. CF(1) has five subunits: alpha(3), beta(3), gamma(1), delta(1), epsilon(1). CF(0) has three main subunits: a, b and c.

It is found in the cell membrane. Its function is as follows. Produces ATP from ADP in the presence of a proton gradient across the membrane. The gamma chain is believed to be important in regulating ATPase activity and the flow of protons through the CF(0) complex. In Streptococcus thermophilus (strain CNRZ 1066), this protein is ATP synthase gamma chain.